The chain runs to 184 residues: Peptide deformylase (184 aa).

The Fe cation site is built by Cys-99 and His-141. Glu-142 is a catalytic residue. Residue His-145 coordinates Fe cation.

This sequence belongs to the polypeptide deformylase family. Fe(2+) serves as cofactor.

The enzyme catalyses N-terminal N-formyl-L-methionyl-[peptide] + H2O = N-terminal L-methionyl-[peptide] + formate. Its function is as follows. Removes the formyl group from the N-terminal Met of newly synthesized proteins. Requires at least a dipeptide for an efficient rate of reaction. N-terminal L-methionine is a prerequisite for activity but the enzyme has broad specificity at other positions. In Chlamydia abortus (strain DSM 27085 / S26/3) (Chlamydophila abortus), this protein is Peptide deformylase.